Reading from the N-terminus, the 154-residue chain is Myoglobin (154 aa).

One can recognise a Globin domain in the interval 2–148 (GLSDDEWNHV…FRNDMASKYK (147 aa)). His-65 contributes to the nitrite binding site. His-65 lines the O2 pocket. His-94 serves as a coordination point for heme b.

Belongs to the globin family. As to quaternary structure, monomeric.

Its subcellular location is the cytoplasm. It is found in the sarcoplasm. It catalyses the reaction Fe(III)-heme b-[protein] + nitric oxide + H2O = Fe(II)-heme b-[protein] + nitrite + 2 H(+). The enzyme catalyses H2O2 + AH2 = A + 2 H2O. In terms of biological role, monomeric heme protein which primary function is to store oxygen and facilitate its diffusion within muscle tissues. Reversibly binds oxygen through a pentacoordinated heme iron and enables its timely and efficient release as needed during periods of heightened demand. Depending on the oxidative conditions of tissues and cells, and in addition to its ability to bind oxygen, it also has a nitrite reductase activity whereby it regulates the production of bioactive nitric oxide. Under stress conditions, like hypoxia and anoxia, it also protects cells against reactive oxygen species thanks to its pseudoperoxidase activity. The protein is Myoglobin (MB) of Caretta caretta (Loggerhead sea turtle).